Consider the following 323-residue polypeptide: Arginase, hepatic (323 aa).

Residues His102, Asp125, His127, and Asp129 each coordinate Mn(2+). Substrate-binding positions include 127–131 (HADIN), 138–140 (SGN), and Asp184. Mn(2+)-binding residues include Asp233 and Asp235. Thr247 and Glu278 together coordinate substrate.

Belongs to the arginase family. In terms of assembly, homotrimer. Mn(2+) serves as cofactor.

The enzyme catalyses L-arginine + H2O = urea + L-ornithine. It participates in nitrogen metabolism; urea cycle; L-ornithine and urea from L-arginine: step 1/1. This is Arginase, hepatic from Aquarana catesbeiana (American bullfrog).